Here is a 463-residue protein sequence, read N- to C-terminus: Sporulation-specific protein 22 (463 aa).

An N-terminal signal peptide occupies residues 1–25 (MNRITRKSCLFAIIFASLFVTHALG). 5 LRR repeats span residues 127–147 (SPELIRIQAGNLNKIEGLFQL), 185–206 (IEIIKDIVISDTSLANIENFNK), 207–233 (VQEIDTFNINNNRFLETIHSNVKTIRG), 251–275 (LREVENITIRDTSLVYLPQLTKVKS), and 302–325 (INNVNLIKVNLENLTDIQGGLMIA). Residues Asn256, Asn314, and Asn327 are each glycosylated (N-linked (GlcNAc...) asparagine). Asn440 carries GPI-anchor amidated asparagine lipidation. Positions 441-463 (SANPSMQLDPLLFGTCLVAMLLF) are cleaved as a propeptide — removed in mature form.

Belongs to the SPS2 family.

It is found in the cell membrane. In terms of biological role, redundant with SPS2 for the organization of the beta-glucan layer of the spore wall. This chain is Sporulation-specific protein 22 (SPS22), found in Saccharomyces cerevisiae (strain ATCC 204508 / S288c) (Baker's yeast).